A 621-amino-acid chain; its full sequence is MDSHTLIQALIYLGAAALIVPIAVRLGLGSVLGYLIAGCIIGPWGLRLVTDAEAILHFAEIGVVLMLFVIGLELDPQRLWKLRASVFGGGALQMVACGVLIGLFCMLLGLRWQVAELIGMTLALSSTAIAMQAMNERNLTVSQMGRSAFAVLLFQDIAAIPLVAMIPLLAASGGATSLVAFALSALKVAAALALVVALGRYLTRPLLRFVARSGLREVFSAVALFLVFGFGLLLEEVGLSMAMGAFLAGVLLASSEYRHALESDIEPFKGLLLGLFFIGVGMSIDFGTLVTHPLRIVILLVGFLAIKMLMLWLIARPLGVPRAQRRWFAVLLGQGSEFAFVVFGAARMADVLDGEWAKALTLAVALSMAATPVLLVLLTRLEKSASGQARDADEIDEEQPRVIVAGFGRFGQIAGRLLLSSGVKMVILDHDPDHVDTLRKFDMKVFYGDATRVDLLESAGAEKAEVLINAIDDPHVSLELVERVKEHFPHLQIISRARDVDHYIKLRQAGVEAPERETFEAALKSGRMTLEALGLGAYEARERADLFRRFNLQMVEEMVAMAENDAASRVAVFKRTSDMLTGIINEDRHHLSLVQRHGWQGTEEGRHTGDIADEPENKPSA.

The next 12 helical transmembrane spans lie at 4 to 24 (HTLI…PIAV), 26 to 46 (LGLG…PWGL), 54 to 74 (AILH…GLEL), 90 to 110 (GALQ…LLGL), 114 to 134 (VAEL…MQAM), 149 to 169 (FAVL…IPLL), 178 to 198 (LVAF…VVAL), 218 to 238 (VFSA…EEVG), 270 to 290 (GLLL…GTLV), 294 to 314 (LRIV…LWLI), 326 to 346 (RWFA…FGAA), and 359 to 379 (ALTL…VLLT). The RCK N-terminal domain maps to 399-518 (QPRVIVAGFG…AGVEAPERET (120 aa)). Residues 598–621 (GWQGTEEGRHTGDIADEPENKPSA) form a disordered region.

It belongs to the monovalent cation:proton antiporter 2 (CPA2) transporter (TC 2.A.37) family. KefC subfamily. In terms of assembly, homodimer. Interacts with the regulatory subunit KefF.

The protein resides in the cell inner membrane. Functionally, pore-forming subunit of a potassium efflux system that confers protection against electrophiles. Catalyzes K(+)/H(+) antiport. The polypeptide is Glutathione-regulated potassium-efflux system protein KefC (Klebsiella pneumoniae (strain 342)).